Here is an 860-residue protein sequence, read N- to C-terminus: Leucine--tRNA ligase (860 aa).

The 'HIGH' region signature appears at 42 to 52 (PYPSGRLHMGH). Positions 619-623 (KMSKS) match the 'KMSKS' region motif. Residue lysine 622 coordinates ATP.

Belongs to the class-I aminoacyl-tRNA synthetase family.

The protein localises to the cytoplasm. It catalyses the reaction tRNA(Leu) + L-leucine + ATP = L-leucyl-tRNA(Leu) + AMP + diphosphate. The chain is Leucine--tRNA ligase from Histophilus somni (strain 2336) (Haemophilus somnus).